A 220-amino-acid polypeptide reads, in one-letter code: Chloramphenicol acetyltransferase (220 aa).

The active-site Proton acceptor is His-187.

It belongs to the chloramphenicol acetyltransferase family. As to quaternary structure, homotrimer.

The enzyme catalyses chloramphenicol + acetyl-CoA = chloramphenicol 3-acetate + CoA. In terms of biological role, this enzyme is an effector of chloramphenicol resistance in bacteria. The polypeptide is Chloramphenicol acetyltransferase (cat86) (Bacillus pumilus (Bacillus mesentericus)).